The primary structure comprises 130 residues: Small ribosomal subunit protein uS8 (130 aa).

It belongs to the universal ribosomal protein uS8 family. In terms of assembly, part of the 30S ribosomal subunit. Contacts proteins S5 and S12.

Functionally, one of the primary rRNA binding proteins, it binds directly to 16S rRNA central domain where it helps coordinate assembly of the platform of the 30S subunit. This is Small ribosomal subunit protein uS8 from Pseudomonas fluorescens (strain ATCC BAA-477 / NRRL B-23932 / Pf-5).